A 183-amino-acid chain; its full sequence is Isopentenyl-diphosphate Delta-isomerase (183 aa).

2 residues coordinate Mn(2+): His26 and His33. A Nudix hydrolase domain is found at 31–169 (PLHFAFSCYV…PFAFSPWMVE (139 aa)). The active site involves Cys68. Cys68 contributes to the Mg(2+) binding site. Residue His70 coordinates Mn(2+). Position 88 (Glu88) interacts with Mg(2+). Mn(2+) is bound by residues Glu118 and Glu120. Glu120 is a catalytic residue.

It belongs to the IPP isomerase type 1 family. The cofactor is Mg(2+). Mn(2+) is required as a cofactor.

Its subcellular location is the cytoplasm. The enzyme catalyses isopentenyl diphosphate = dimethylallyl diphosphate. It participates in isoprenoid biosynthesis; dimethylallyl diphosphate biosynthesis; dimethylallyl diphosphate from isopentenyl diphosphate: step 1/1. Catalyzes the 1,3-allylic rearrangement of the homoallylic substrate isopentenyl (IPP) to its highly electrophilic allylic isomer, dimethylallyl diphosphate (DMAPP). The sequence is that of Isopentenyl-diphosphate Delta-isomerase from Corynebacterium diphtheriae (strain ATCC 700971 / NCTC 13129 / Biotype gravis).